Reading from the N-terminus, the 604-residue chain is MSGAGEHSDEESYGEESFEEDSESEVEVEEEEIEYIEPEESKPSDALLLGESDTQSESDVKEEFLSGNPHARRYLGARVVSYLSSSSDDESQVVITKTVAEVNQLSLRVDTPPEDETPSVRTLMPGSAHSRVKDEDEAEDEDDDEGDGENDNDNEDENDDEDAEVEEIEEEEEEIPGDEDDAQSDGSMGRQSADDSDEEEGTDVEVEQLEEDEPIVTAVCKKTVQKELPPPQKDIVSLVDASDNSSEHSVVTMCASGDETDNTLVKYPRLRKQQPLTAKDSQSLKEQEEPEEPEQPEENQTEEHMPTSQPDLARVRYLEQQMTQMSELIMKSFQINGGAPNSQAFEQLAMATEMLQQRSDRRGDTESEMSSMTETTMTSARSLGGGIPPLTMRMERSQEALLTTRSSKLPRPKCRCPSESDLIEHEQKLDMGHELPHDLAANFGLGEGYLVDECGQGDGLMRHPQQRKPMELNRRAVSGTPSTFNSDGCEYQINVSRSRCSNDKINYKNLGRKSFSFTNPQVREIERQNQILLRKMMTVKPTATIKASTSSIKINGPEKRQTPPAPRLSSAAVNRKKNQRQIDLDNDLLKRKLEAIGTRRPQFK.

4 disordered regions span residues 1–70 (MSGA…GNPH), 103–309 (NQLS…PTSQ), 359–387 (SDRR…GGGI), and 544–585 (TIKA…IDLD). Composition is skewed to acidic residues over residues 8-38 (SDEE…YIEP), 135-183 (EDEA…DDAQ), 194-214 (DDSD…EDEP), and 288-300 (EEPE…EENQ). The span at 368–379 (EMSSMTETTMTS) shows a compositional bias: low complexity.

The protein belongs to the CFAP97 family. Detected in ciliated sensory neurons at all stages of development, and in adult testis.

It localises to the cell projection. Its subcellular location is the cilium. It is found in the perikaryon. The protein resides in the cytoplasm. In terms of biological role, involved in assembly and/or maintenance of motile cilia. Required during spermatogenesis for axoneme elongation. Necessary for optimal function of the chordotonal (hearing) organs. The protein is Protein hemingway of Drosophila melanogaster (Fruit fly).